The sequence spans 721 residues: Penicillin-binding protein activator LpoA (721 aa).

A signal peptide spans 1–26; that stretch reads MVPLTFLRTKASRSLPIMLAALIFAG. A lipid anchor (N-palmitoyl cysteine) is attached at Cys27. Cys27 carries the S-diacylglycerol cysteine lipid modification. The span at 316-330 shows a compositional bias: polar residues; it reads TSDLTSAQAPAQGTM. The interval 316–393 is disordered; the sequence is TSDLTSAQAP…PAAQPQAVAA (78 aa). Residues 331 to 393 are compositionally biased toward low complexity; the sequence is QNPVTAPTTP…PAAQPQAVAA (63 aa).

The protein belongs to the LpoA family. In terms of assembly, interacts with PBP1a.

The protein localises to the cell outer membrane. Regulator of peptidoglycan synthesis that is essential for the function of penicillin-binding protein 1A (PBP1a). The sequence is that of Penicillin-binding protein activator LpoA from Enterobacter sp. (strain 638).